A 284-amino-acid chain; its full sequence is MEMO1 family protein Saci_0089 (284 aa).

It belongs to the MEMO1 family.

The polypeptide is MEMO1 family protein Saci_0089 (Sulfolobus acidocaldarius (strain ATCC 33909 / DSM 639 / JCM 8929 / NBRC 15157 / NCIMB 11770)).